The following is a 1070-amino-acid chain: Granule associated Rac and RHOG effector protein 1 (1070 aa).

Disordered regions lie at residues 681–771 (EQKA…VGAG), 855–992 (SQAM…STLP), and 1032–1070 (SYVQ…LPQY). The span at 692-702 (PSLPVPPPPRA) shows a compositional bias: pro residues. Composition is skewed to low complexity over residues 719–742 (PQQQ…QPIG), 906–924 (AQGD…NGDS), and 951–962 (TSTLPSPPLLTT). Residue Ser723 is modified to Phosphoserine. Positions 977-992 (PKAPWQHPSPLPSTLP) are enriched in pro residues. Residues 1046-1058 (HKAAPKGFKAFPG) show a composition bias toward low complexity.

In terms of assembly, interacts with AGO2 and TNRC6A.

Its subcellular location is the cytoplasm. It localises to the P-body. Functionally, acts as an effector of RAC1. Associates with CCR4-NOT complex which is one of the major cellular mRNA deadenylases and is linked to various cellular processes including bulk mRNA degradation, miRNA-mediated repression, translational repression during translational initiation and general transcription regulation. May also play a role in miRNA silencing machinery. In Homo sapiens (Human), this protein is Granule associated Rac and RHOG effector protein 1.